The following is a 219-amino-acid chain: Protein-L-isoaspartate O-methyltransferase 2 (219 aa).

Ser-60 is a catalytic residue.

This sequence belongs to the methyltransferase superfamily. L-isoaspartyl/D-aspartyl protein methyltransferase family.

The protein resides in the cytoplasm. The catalysed reaction is [protein]-L-isoaspartate + S-adenosyl-L-methionine = [protein]-L-isoaspartate alpha-methyl ester + S-adenosyl-L-homocysteine. In terms of biological role, catalyzes the methyl esterification of L-isoaspartyl residues in peptides and proteins that result from spontaneous decomposition of normal L-aspartyl and L-asparaginyl residues. It plays a role in the repair and/or degradation of damaged proteins. This Archaeoglobus fulgidus (strain ATCC 49558 / DSM 4304 / JCM 9628 / NBRC 100126 / VC-16) protein is Protein-L-isoaspartate O-methyltransferase 2 (pcm2).